The following is a 387-amino-acid chain: Proteinase R (387 aa).

The N-terminal stretch at 1 to 21 is a signal peptide; sequence MRLSILLGLLPLAPRPPAVDA. Residues 22–108 constitute a propeptide that is removed on maturation; that stretch reads VEQRSEPAPL…IEQDAIVNIN (87 aa). The Inhibitor I9 domain occupies 42–107; sequence KYIVKLKEGS…YIEQDAIVNI (66 aa). The 273-residue stretch at 115–387 folds into the Peptidase S8 domain; sequence PWGLARISST…NLLAYNNYQG (273 aa). Thr124 is a binding site for Ca(2+). 2 cysteine pairs are disulfide-bonded: Cys142–Cys231 and Cys286–Cys357. Active-site charge relay system residues include Asp147 and His177. Asp308 is a Ca(2+) binding site. Catalysis depends on Ser332, which acts as the Charge relay system. Asp368 is a binding site for Ca(2+).

Belongs to the peptidase S8 family. It depends on Ca(2+) as a cofactor.

In terms of biological role, serine proteinase. The chain is Proteinase R (PROR) from Parengyodontium album (Tritirachium album).